The primary structure comprises 51 residues: Large ribosomal subunit protein eL39 (51 aa).

This sequence belongs to the eukaryotic ribosomal protein eL39 family. Part of the 50S ribosomal subunit.

This chain is Large ribosomal subunit protein eL39, found in Thermococcus kodakarensis (strain ATCC BAA-918 / JCM 12380 / KOD1) (Pyrococcus kodakaraensis (strain KOD1)).